Here is a 562-residue protein sequence, read N- to C-terminus: Exonuclease subunit 2 (562 aa).

Gly-36–Ser-43 serves as a coordination point for ATP.

This sequence to phage T5 protein D13 and to yeast RAD52. Consists of two subunits: Gp47 and Gp46.

In terms of biological role, exonuclease involved in phage DNA recombination, replication, and repair. This is Exonuclease subunit 2 (46) from Escherichia phage RB69 (Bacteriophage RB69).